The sequence spans 791 residues: Pleckstrin homology domain-containing family H member 3 (791 aa).

The N-terminal stretch at 1–18 (MPLPGGLWWLLCCRRGFT) is a signal peptide. Positions 29-41 (LSGDGDEDEDDET) are enriched in acidic residues. Residues 29-71 (LSGDGDEDEDDETFELRSPSPAGGGRGSLDVTLTQPTRNGPIT) form a disordered region. Ser30 carries the phosphoserine modification. Positions 59 to 71 (VTLTQPTRNGPIT) are enriched in polar residues. Residues 95–199 (DVIVKGWLYR…WGVALREVIA (105 aa)) form the PH domain. In terms of domain architecture, MyTH4 spans 237 to 399 (HTSSALYAPL…PSLAEISALS (163 aa)). Positions 404 to 755 (LLCTVHCPGA…ANPSPERPCS (352 aa)) constitute an FERM domain. The segment covering 549–559 (PRGPLPLLDRL) has biased composition (low complexity). Disordered stretches follow at residues 549–580 (PRGP…PPPS) and 593–623 (LAKR…GGGS). The segment covering 594 to 605 (AKRRAERARRIG) has biased composition (basic residues). Arg636 is modified (omega-N-methylarginine). The disordered stretch occupies residues 748–791 (PSPERPCSSSGPPSQDLSDTSPPSQHQVLEKPQGQSGCLRQLQD). The segment covering 754-791 (CSSSGPPSQDLSDTSPPSQHQVLEKPQGQSGCLRQLQD) has biased composition (polar residues).

This Rattus norvegicus (Rat) protein is Pleckstrin homology domain-containing family H member 3 (Plekhh3).